The primary structure comprises 500 residues: Probable cytosol aminopeptidase (500 aa).

Positions 264 and 269 each coordinate Mn(2+). Residue lysine 276 is part of the active site. 3 residues coordinate Mn(2+): aspartate 287, aspartate 346, and glutamate 348. Residue arginine 350 is part of the active site.

It belongs to the peptidase M17 family. The cofactor is Mn(2+).

The protein localises to the cytoplasm. It carries out the reaction Release of an N-terminal amino acid, Xaa-|-Yaa-, in which Xaa is preferably Leu, but may be other amino acids including Pro although not Arg or Lys, and Yaa may be Pro. Amino acid amides and methyl esters are also readily hydrolyzed, but rates on arylamides are exceedingly low.. It catalyses the reaction Release of an N-terminal amino acid, preferentially leucine, but not glutamic or aspartic acids.. Functionally, presumably involved in the processing and regular turnover of intracellular proteins. Catalyzes the removal of unsubstituted N-terminal amino acids from various peptides. This is Probable cytosol aminopeptidase from Rickettsia canadensis (strain McKiel).